Consider the following 400-residue polypeptide: Nicotinate phosphoribosyltransferase (400 aa).

His220 bears the Phosphohistidine; by autocatalysis mark.

Belongs to the NAPRTase family. Transiently phosphorylated on a His residue during the reaction cycle. Phosphorylation strongly increases the affinity for substrates and increases the rate of nicotinate D-ribonucleotide production. Dephosphorylation regenerates the low-affinity form of the enzyme, leading to product release.

It catalyses the reaction nicotinate + 5-phospho-alpha-D-ribose 1-diphosphate + ATP + H2O = nicotinate beta-D-ribonucleotide + ADP + phosphate + diphosphate. The protein operates within cofactor biosynthesis; NAD(+) biosynthesis; nicotinate D-ribonucleotide from nicotinate: step 1/1. Functionally, catalyzes the synthesis of beta-nicotinate D-ribonucleotide from nicotinate and 5-phospho-D-ribose 1-phosphate at the expense of ATP. This chain is Nicotinate phosphoribosyltransferase, found in Escherichia coli O17:K52:H18 (strain UMN026 / ExPEC).